We begin with the raw amino-acid sequence, 460 residues long: Lysosomal proton-coupled steroid conjugate and bile acid symporter SLC46A3 (460 aa).

The N-terminal stretch at 1–25 (MKISFIEPAILLNAFAMTLTIPLTA) is a signal peptide. Topologically, residues 26 to 73 (QYVYRRIWEETGNYTFASNSNGSECDQNKSSSIFAFREEVQKKASLFN) are extracellular. N-linked (GlcNAc...) asparagine glycosylation is found at Asn38, Asn46, and Asn53. A helical transmembrane segment spans residues 74-94 (LQVEMSALIPGLVSTFMLLAS). Over 95–111 (SDNHGRKLPMVLSSLGS) the chain is Cytoplasmic. Residues 112 to 132 (LGTNTWLCMMSYFDLPLQLLI) traverse the membrane as a helical segment. Residues 133-135 (AST) are Extracellular-facing. Residues 136-156 (FIGALFGNYTTFWGACFAYIV) traverse the membrane as a helical segment. The Cytoplasmic segment spans residues 157 to 170 (DQQKEYKHRIIRIA). The helical transmembrane segment at 171 to 191 (ILDFMLGVVTGLTGLSSGYFI) threads the bilayer. Residues 192-195 (RELG) lie on the Extracellular side of the membrane. A helical transmembrane segment spans residues 196–216 (FVWSYFITAMVLIVNLAYILF). The Cytoplasmic portion of the chain corresponds to 217-257 (FLNDPIKESSSQIVTMSCIESLKDLFYRTYMLFKNGSSKRQ). The chain crosses the membrane as a helical span at residues 258–278 (ALLCLLIFTLVIYFFVIIGIS). Residues 279-301 (PIFTLYELGPPLCWNEVYIGYGS) lie on the Extracellular side of the membrane. Residues 302–322 (ALGSVSFLSSFLGIWLFSYCL) form a helical membrane-spanning segment. The Cytoplasmic portion of the chain corresponds to 323 to 324 (KD). Residues 325–345 (IHIAYIGIFTTMVGMTLAAFT) form a helical membrane-spanning segment. Residues 346-347 (RT) lie on the Extracellular side of the membrane. The chain crosses the membrane as a helical span at residues 348–368 (TLMMFLVRIPFIFTIMPLSVL). Residues 369-381 (RSMLSKVVHSTEQ) are Cytoplasmic-facing. The helical transmembrane segment at 382-402 (GALFACIAFLETLAGVTSTSA) threads the bilayer. The Extracellular portion of the chain corresponds to 403–410 (YSGIYSAT). A helical membrane pass occupies residues 411 to 431 (VAWYPGFIFLLSAGLLVLPAI). At 432-460 (SLCCVKSIGWEEGSYTLLVHEEPSEHTSD) the chain is on the cytoplasmic side. The short motif at 446 to 449 (YTLL) is the Tyrosine-based lysosomal-sorting motif element.

It belongs to the major facilitator superfamily. SLC46A family. Expressed in liver, kidney, small intestine and colon.

It localises to the lysosome membrane. It carries out the reaction estrone 3-sulfate(out) + n H(+)(out) = estrone 3-sulfate(in) + n H(+)(in). The enzyme catalyses 25-hydroxyvitamin D3 sulfate(out) + n H(+)(out) = 25-hydroxyvitamin D3 sulfate(in) + n H(+)(in). It catalyses the reaction cholate(out) + n H(+)(out) = cholate(in) + n H(+)(in). The catalysed reaction is glycocholate(out) + n H(+)(out) = glycocholate(in) + n H(+)(in). It carries out the reaction taurocholate(out) + n H(+)(out) = taurocholate(in) + n H(+)(in). The enzyme catalyses dehydroepiandrosterone 3-sulfate(out) + n H(+)(out) = dehydroepiandrosterone 3-sulfate(in) + n H(+)(in). It catalyses the reaction N-acetyl-D-muramoyl-L-alanyl-D-isoglutamine(out) + n H(+)(out) = N-acetyl-D-muramoyl-L-alanyl-D-isoglutamine(in) + n H(+)(in). The catalysed reaction is 2',3'-cGAMP(out) + n H(+)(out) = 2',3'-cGAMP(in) + n H(+)(in). Functionally, lysosomal proton-coupled steroid conjugate and bile acid transporter. Preferentially recognizes lipophilic steroid conjugates or bile acis as endogenous substrates and seems to mediate escape from lysosomes to the cytoplasm. Modulates hepatic cytosolic copper homeostasis, maybe acting as a lysosomal copper transporter and sequestering copper ions in the lysosome. Delivers pathogen-associated molecular patterns to cytosolic pattern recognition receptors as part of the innate immune response to microbes. Selectively transports bacterial muramyl dipeptide (MDP) into the cytosol for recognition by NOD2, triggering inflammatory responses. Likely acts as a redundant importer of cyclic GMP-AMP dinucleotides (cGAMPs) in monocyte and macrophage cell lineages. The transport mechanism, its electrogenicity and stoichiometry remain to be elucidated. The chain is Lysosomal proton-coupled steroid conjugate and bile acid symporter SLC46A3 (Slc46a3) from Mus musculus (Mouse).